The primary structure comprises 384 residues: Helix-loop-helix protein delilah (384 aa).

2 disordered regions span residues 1–101 (MKSN…TANA) and 187–227 (EEAE…KIVP). A compositionally biased stretch (basic residues) spans 75 to 86 (KSRKNAPTKSKT). One can recognise a bHLH domain in the interval 94 to 153 (YRRKTANARERTRMREINTAFETLRHCVPEAIKGEDAANTNEKLTKITTLRLAMKYITML). The segment covering 209 to 224 (KKSSAASKRQSQKQAK) has biased composition (low complexity).

As to quaternary structure, efficient DNA binding requires dimerization with another bHLH protein, possibly with da. Expressed almost exclusively in the attachments sites of the somatic muscles to tendon cells in the epidermis.

It localises to the nucleus. Its function is as follows. Probably plays an important role in the differentiation of epidermal cells into the tendon cells that form the attachment sites for all muscles. This chain is Helix-loop-helix protein delilah (tx), found in Drosophila melanogaster (Fruit fly).